The sequence spans 552 residues: Putative pentatricopeptide repeat-containing protein At1g64310 (552 aa).

PPR repeat units lie at residues 39-69 (DPYF…FPER), 70-104 (SVFL…DTRP), 105-139 (DNFT…GLGF), 140-170 (DQIC…IPDP), 171-205 (DLAL…GHQP), 206-240 (NCYT…NLDS), 241-271 (HSYV…ISEP), 272-306 (DLVA…GKKP), 307-341 (DCVL…GLEL), 342-372 (DIKV…IPEK), 373-407 (NIVS…GLIP), 408-438 (DEIT…MKSE), and 444-474 (QTEH…LQKP). The tract at residues 479–552 (ILGALLSCCE…GGKLPGISWF (74 aa)) is type E motif; degenerate.

It belongs to the PPR family. PCMP-E subfamily.

The protein is Putative pentatricopeptide repeat-containing protein At1g64310 (PCMP-E65) of Arabidopsis thaliana (Mouse-ear cress).